A 231-amino-acid chain; its full sequence is Flagellar L-ring protein (231 aa).

Residues M1–G18 form the signal peptide. Residue C19 is the site of N-palmitoyl cysteine attachment. C19 is lipidated: S-diacylglycerol cysteine.

It belongs to the FlgH family. The basal body constitutes a major portion of the flagellar organelle and consists of four rings (L,P,S, and M) mounted on a central rod.

The protein resides in the cell outer membrane. It localises to the bacterial flagellum basal body. Functionally, assembles around the rod to form the L-ring and probably protects the motor/basal body from shearing forces during rotation. The sequence is that of Flagellar L-ring protein from Pseudomonas putida (strain GB-1).